A 201-amino-acid polypeptide reads, in one-letter code: MKPVTCCNQKNNIMPSLVPVCCSEKKIESDAKKSISKCCGDKEIYDSENRPITKEDGSWIPGSCKQCRSDPHSRNFCQSLSNKCSSSSFSSNSALSPDLNEQQTDVNYNSIKLPEICSCKNAQMNAASDAKRYLPISYTYQKIRQHMQKNKSIQEQLNPEDSTSISSALENIASGLHVRGQKVELQSIKDALHKMDKNVLE.

Interacts with the chaperones HSP82 and HSC82.

This is an uncharacterized protein from Saccharomyces cerevisiae (strain ATCC 204508 / S288c) (Baker's yeast).